The following is a 204-amino-acid chain: Imidazoleglycerol-phosphate dehydratase (204 aa).

This sequence belongs to the imidazoleglycerol-phosphate dehydratase family.

It localises to the cytoplasm. The enzyme catalyses D-erythro-1-(imidazol-4-yl)glycerol 3-phosphate = 3-(imidazol-4-yl)-2-oxopropyl phosphate + H2O. It participates in amino-acid biosynthesis; L-histidine biosynthesis; L-histidine from 5-phospho-alpha-D-ribose 1-diphosphate: step 6/9. This is Imidazoleglycerol-phosphate dehydratase from Rhodococcus jostii (strain RHA1).